Here is a 161-residue protein sequence, read N- to C-terminus: Ragulator complex protein LAMTOR1 (161 aa).

The interval 1 to 43 is disordered; sequence MGCCYSSENEDSDQDREERKLLLDPSSTPTKALNGAEPNYHSL. Gly2 carries N-myristoyl glycine lipidation. 2 S-palmitoyl cysteine lipidation sites follow: Cys3 and Cys4. Lys20 participates in a covalent cross-link: Glycyl lysine isopeptide (Lys-Gly) (interchain with G-Cter in ubiquitin). Ser27 is modified (phosphoserine). Phosphothreonine is present on Thr28. A Glycyl lysine isopeptide (Lys-Gly) (interchain with G-Cter in ubiquitin) cross-link involves residue Lys31. Phosphoserine occurs at positions 42 and 56. Lys60 participates in a covalent cross-link: Glycyl lysine isopeptide (Lys-Gly) (interchain with G-Cter in ubiquitin). Ser98 is modified (phosphoserine). Glycyl lysine isopeptide (Lys-Gly) (interchain with G-Cter in ubiquitin) cross-links involve residues Lys103 and Lys104. The tract at residues 121 to 161 is interaction with LAMTOR2 and LAMTOR3; the sequence is SEPIPFSDLQQVSRIAAYAYSALSQIRVDAKEELVVQFGIP. The residue at position 141 (Ser141) is a Phosphoserine.

It belongs to the LAMTOR1 family. In terms of assembly, part of the Ragulator complex composed of LAMTOR1, LAMTOR2, LAMTOR3, LAMTOR4 and LAMTOR5. LAMTOR4 and LAMTOR5 form a heterodimer that interacts, through LAMTOR1, with a LAMTOR2, LAMTOR3 heterodimer. Interacts with LAMTOR2 and LAMTOR3; the interaction is direct. The Ragulator complex interacts with both the mTORC1 complex and heterodimers constituted of the Rag GTPases RagA/RRAGA, RagB/RRAGB, RagC/RRAGC and RagD/RRAGD; regulated by amino acid availability. The Ragulator complex interacts with SLC38A9; the probable amino acid sensor. Component of the lysosomal folliculin complex (LFC), composed of FLCN, FNIP1 (or FNIP2), RagA/RRAGA or RagB/RRAGB GDP-bound, RagC/RRAGC or RagD/RRAGD GTP-bound, and Ragulator. Associates with the lysosomal V-ATPase complex; interaction promotes the guanine nucleotide exchange factor (GEF) of the Ragulator complex. Interacts with MMP14. Interacts with CDKN1B; prevents the interaction of CDKN1B with RHOA leaving RHOA in a form accessible to activation by ARHGEF2. Interacts with PIP4P1. N-terminal myristoylation and palmitoylation mediates its recruitment to lysosome membranes, thereby promoting localization of the Ragulator complex to lysosomes. N-myristoylation by NMT1 is required for palmitoylation at Cys-3 and Cys-4. In terms of processing, ubiquitinated at Lys-60, Lys-103 and Lys-104 by UBE3A in neurons, promoting its degradation by the proteasome, thereby limiting mTORC1 signaling and activity-dependent synaptic remodeling. Ubiquitination at Lys-20 impairs the association with the lysosomal V-ATPase complex. Deubiquitination at Lys-20 by USP32 promotes the association with the lysosomal V-ATPase complex and subsequent activation of the mTORC1 complex.

The protein resides in the lysosome membrane. Its subcellular location is the late endosome membrane. Functionally, key component of the Ragulator complex, a multiprotein complex involved in amino acid sensing and activation of mTORC1, a signaling complex promoting cell growth in response to growth factors, energy levels, and amino acids. Activated by amino acids through a mechanism involving the lysosomal V-ATPase, the Ragulator plays a dual role for the small GTPases Rag (RagA/RRAGA, RagB/RRAGB, RagC/RRAGC and/or RagD/RRAGD): it (1) acts as a guanine nucleotide exchange factor (GEF), activating the small GTPases Rag and (2) mediates recruitment of Rag GTPases to the lysosome membrane. Activated Ragulator and Rag GTPases function as a scaffold recruiting mTORC1 to lysosomes where it is in turn activated. LAMTOR1 is directly responsible for anchoring the Ragulator complex to the lysosomal membrane. LAMTOR1 wraps around the other subunits of the Ragulator complex to hold them in place and interacts with the Rag GTPases, thereby playing a key role in the recruitment of the mTORC1 complex to lysosomes. Also involved in the control of embryonic stem cells differentiation via non-canonical RagC/RRAGC and RagD/RRAGD activation: together with FLCN, it is necessary to recruit and activate RagC/RRAGC and RagD/RRAGD at the lysosomes, and to induce exit of embryonic stem cells from pluripotency via non-canonical, mTOR-independent TFE3 inactivation. Also required for late endosomes/lysosomes biogenesis it may regulate both the recycling of receptors through endosomes and the MAPK signaling pathway through recruitment of some of its components to late endosomes. May be involved in cholesterol homeostasis regulating LDL uptake and cholesterol release from late endosomes/lysosomes. May also play a role in RHOA activation. The sequence is that of Ragulator complex protein LAMTOR1 from Mus musculus (Mouse).